Here is a 385-residue protein sequence, read N- to C-terminus: MNRRRKLLIPLLFCGAMLTACDDKSAENAAAMTPEVGVVTLSPGSVNVLSELPGRTVPYEVAEIRPQVGGIIIKRNFIEGDKVNQGDSLYQIDPAPLQAELNSAKGSLAKALSTASNARITFNRQASLLKTNYVSRQDYDTARTQLNEAEANVTVAKAAVEQATINLQYANVTSPITGVSGKSSVTVGALVTANQADSLVTVQRLDPIYVDLTQSVQDFLRMKEEVASGQIKQVQGSTPVQLNLENGKRYSQTGTLKFSDPTVDETTGSVTLRAIFPNPNGDLLPGMYVTALVDEGSRQNVLLVPQEGVTHNAQGKATALILDKDDVVQLREIEASKAIGDQWVVTSGLQAGDRVIVSGLQRIRPGIKARAISSSQENASTESKQ.

A signal peptide spans methionine 1–alanine 20. Cysteine 21 is lipidated: N-palmitoyl cysteine. Cysteine 21 is lipidated: S-diacylglycerol cysteine.

The protein belongs to the membrane fusion protein (MFP) (TC 8.A.1) family. In terms of assembly, homotrimer. Part of the tripartite efflux system MdtEF-TolC, which is composed of an inner membrane transporter, MdtF, a membrane fusion protein, MdtE, and an outer membrane component, TolC. The complex forms a large protein conduit and can translocate molecules across both the inner and outer membranes.

The protein localises to the cell inner membrane. Part of the tripartite efflux system MdtEF-TolC, which confers resistance to compounds such as rhodamine 6G, erythromycin, doxorubicin, ethidium bromide, TPP, SDS, deoxycholate, crystal violet and benzalkonium. The sequence is that of Multidrug resistance protein MdtE (mdtE) from Escherichia coli (strain K12).